Here is a 424-residue protein sequence, read N- to C-terminus: Glutamyl-tRNA reductase (424 aa).

Residues 50–53 (TCNR), serine 98, 103–105 (EDQ), and glutamine 109 contribute to the substrate site. Cysteine 51 serves as the catalytic Nucleophile. An NADP(+)-binding site is contributed by 178-183 (GSGEMG).

Belongs to the glutamyl-tRNA reductase family. Homodimer.

It catalyses the reaction (S)-4-amino-5-oxopentanoate + tRNA(Glu) + NADP(+) = L-glutamyl-tRNA(Glu) + NADPH + H(+). It functions in the pathway porphyrin-containing compound metabolism; protoporphyrin-IX biosynthesis; 5-aminolevulinate from L-glutamyl-tRNA(Glu): step 1/2. Catalyzes the NADPH-dependent reduction of glutamyl-tRNA(Glu) to glutamate 1-semialdehyde (GSA). The protein is Glutamyl-tRNA reductase of Methanoregula boonei (strain DSM 21154 / JCM 14090 / 6A8).